Reading from the N-terminus, the 510-residue chain is Ribonuclease Y (510 aa).

The helical transmembrane segment at 1-21 (MLIYILSGLGVLVGALLGYVV) threads the bilayer. The region spanning 200–260 (TVSTIMLPND…LRREIAKRTI (61 aa)) is the KH domain. One can recognise an HD domain in the interval 326–419 (VLNHSIEVAL…VAAADALSAA (94 aa)).

The protein belongs to the RNase Y family.

It is found in the cell membrane. Its function is as follows. Endoribonuclease that initiates mRNA decay. This Thermosipho melanesiensis (strain DSM 12029 / CIP 104789 / BI429) protein is Ribonuclease Y.